The chain runs to 283 residues: Phosphate import ATP-binding protein PstB 1 (283 aa).

Residues 1–16 show a composition bias toward acidic residues; the sequence is MSSDDTTDPTADDESF. Positions 1–35 are disordered; the sequence is MSSDDTTDPTADDESFTDSPVAGLEQSTTTRGSGR. The ABC transporter domain occupies 38–278; it reads ISARNINVWY…PSSERVENYI (241 aa). An ATP-binding site is contributed by 70–77; that stretch reads GPSGCGKS.

It belongs to the ABC transporter superfamily. Phosphate importer (TC 3.A.1.7) family. The complex is composed of two ATP-binding proteins (PstB), two transmembrane proteins (PstC and PstA) and a solute-binding protein (PstS).

The protein localises to the cell membrane. It carries out the reaction phosphate(out) + ATP + H2O = ADP + 2 phosphate(in) + H(+). Functionally, part of the ABC transporter complex PstSACB involved in phosphate import. Responsible for energy coupling to the transport system. This Natronomonas pharaonis (strain ATCC 35678 / DSM 2160 / CIP 103997 / JCM 8858 / NBRC 14720 / NCIMB 2260 / Gabara) (Halobacterium pharaonis) protein is Phosphate import ATP-binding protein PstB 1.